A 103-amino-acid polypeptide reads, in one-letter code: Integration host factor subunit beta (103 aa).

Residues 62-81 (RNPKTGESVALPGKHVPHFK) form a disordered region.

This sequence belongs to the bacterial histone-like protein family. As to quaternary structure, heterodimer of an alpha and a beta chain.

Its function is as follows. This protein is one of the two subunits of integration host factor, a specific DNA-binding protein that functions in genetic recombination as well as in transcriptional and translational control. The sequence is that of Integration host factor subunit beta from Xanthomonas axonopodis pv. citri (strain 306).